Consider the following 197-residue polypeptide: Holliday junction branch migration complex subunit RuvA (197 aa).

Positions 1-64 are domain I; that stretch reads MIARLAGKVA…QDAIELYGFA (64 aa). A domain II region spans residues 65–141; the sequence is SEDEEAVFRA…LALLARAAGP (77 aa). The segment at 141–145 is flexible linker; the sequence is PARAK. The segment at 146–197 is domain III; that stretch reads PGAGVVEQLRQALVNLGYKPPQADAAADALRDEAEGKKLDELLREALKRLRG.

Belongs to the RuvA family. In terms of assembly, homotetramer. Forms an RuvA(8)-RuvB(12)-Holliday junction (HJ) complex. HJ DNA is sandwiched between 2 RuvA tetramers; dsDNA enters through RuvA and exits via RuvB. An RuvB hexamer assembles on each DNA strand where it exits the tetramer. Each RuvB hexamer is contacted by two RuvA subunits (via domain III) on 2 adjacent RuvB subunits; this complex drives branch migration. In the full resolvosome a probable DNA-RuvA(4)-RuvB(12)-RuvC(2) complex forms which resolves the HJ.

It is found in the cytoplasm. The RuvA-RuvB-RuvC complex processes Holliday junction (HJ) DNA during genetic recombination and DNA repair, while the RuvA-RuvB complex plays an important role in the rescue of blocked DNA replication forks via replication fork reversal (RFR). RuvA specifically binds to HJ cruciform DNA, conferring on it an open structure. The RuvB hexamer acts as an ATP-dependent pump, pulling dsDNA into and through the RuvAB complex. HJ branch migration allows RuvC to scan DNA until it finds its consensus sequence, where it cleaves and resolves the cruciform DNA. This is Holliday junction branch migration complex subunit RuvA from Anaeromyxobacter sp. (strain Fw109-5).